A 400-amino-acid chain; its full sequence is Acetate kinase (400 aa).

A Mg(2+)-binding site is contributed by asparagine 10. Lysine 17 contacts ATP. Position 91 (arginine 91) interacts with substrate. The active-site Proton donor/acceptor is aspartate 150. ATP is bound by residues 210–214, 285–287, and 333–337; these read HLGNG, DCR, and GIGEN. A Mg(2+)-binding site is contributed by glutamate 387.

It belongs to the acetokinase family. Homodimer. Mg(2+) serves as cofactor. Mn(2+) is required as a cofactor.

It is found in the cytoplasm. The catalysed reaction is acetate + ATP = acetyl phosphate + ADP. It functions in the pathway metabolic intermediate biosynthesis; acetyl-CoA biosynthesis; acetyl-CoA from acetate: step 1/2. Catalyzes the formation of acetyl phosphate from acetate and ATP. Can also catalyze the reverse reaction. The polypeptide is Acetate kinase (Serratia proteamaculans (strain 568)).